A 496-amino-acid chain; its full sequence is MAKRHLLLVTTCLWALSCALLLHASSDGFLRVNLNKKRLDKEDLTAAKLAQQGNRLLKTGSSDSDPVPLVDYLNTQYYGVIGLGSPPQNFTVIFDTGSSNLWVPSAKCYFSIACYLHSRYNSKKSSSYKADGETCKITYGSGAISGFFSKDNVLVGDLVVKNQKFIEATRETSVTFIIGKFDGILGLGYPEISVGKAPPIWQSMQEQELLADDVFSFWLNRDPDASSGGELVFGGMDPKHYKGDHTYVPVSRKGYWQFNMGDLLIDGHSTGFCAKGCAAIVDSGTSLLAGPTAIVAQVNHAIGAEGIISTECKEVVSEYGEMILNLLIAQTDPQKVCSQVGLCMFDGKRSVSNGIESVVDKENLGSDAMCSVCEMAVVWIENQLRENKTKELILNYANQLCERLPSPNGESTVSCHQISKMPNLAFTIANKTFILTPEQYIVKLEQGGQTVCISGFMAFDIPPPRGPLWILGDVFMGAYHTVFDFGKDRIGFAKSA.

The N-terminal stretch at 1–24 (MAKRHLLLVTTCLWALSCALLLHA) is a signal peptide. Positions 25 to 59 (SSDGFLRVNLNKKRLDKEDLTAAKLAQQGNRLLKT) are cleaved as a propeptide — activation peptide. One can recognise a Peptidase A1 domain in the interval 77-493 (YYGVIGLGSP…DFGKDRIGFA (417 aa)). Residue aspartate 95 is part of the active site. Cystine bridges form between cysteine 108-cysteine 114 and cysteine 273-cysteine 277. Residue aspartate 282 is part of the active site. The Saposin B-type domain maps to 307-407 (IISTECKEVV…NQLCERLPSP (101 aa)). 4 disulfides stabilise this stretch: cysteine 312-cysteine 401, cysteine 337-cysteine 373, cysteine 343-cysteine 370, and cysteine 415-cysteine 452. N-linked (GlcNAc...) asparagine glycosylation occurs at asparagine 387.

This sequence belongs to the peptidase A1 family.

The protein localises to the vacuole. Functionally, involved in the breakdown of propeptides of storage proteins in protein-storage vacuoles. This chain is Aspartic proteinase (RAP), found in Oryza sativa subsp. japonica (Rice).